The following is a 237-amino-acid chain: Early nodulin-like protein 1 (237 aa).

The signal sequence occupies residues 1–28 (MEASRRWPYAAWFMAVLGLVAVFSSSEA). The 106-residue stretch at 29–134 (YVFYAGGRDG…GQKLYIIVMA (106 aa)) folds into the Phytocyanin domain. An N-linked (GlcNAc...) asparagine glycan is attached at asparagine 59. An intrachain disulfide couples cysteine 85 to cysteine 122. Residues 139-215 (KPSEAPEPAG…SLGAPPPTSG (77 aa)) are disordered. 2 stretches are compositionally biased toward low complexity: residues 140–152 (PSEA…AAGP) and 201–215 (MSRS…PTSG). Serine 206 is lipidated: GPI-anchor amidated serine. Positions 207–237 (LGAPPPTSGAAGLAGVVASVVVGVLGALLMF) are cleaved as a propeptide — removed in mature form.

It belongs to the early nodulin-like (ENODL) family. In terms of tissue distribution, expressed ubiquitously. Accumulates particularly in reproductive tissues, especially in maturing seeds.

The protein localises to the vacuole. Its subcellular location is the aleurone grain membrane. In terms of biological role, may act as a carbohydrate transporter. This chain is Early nodulin-like protein 1, found in Oryza sativa subsp. japonica (Rice).